Reading from the N-terminus, the 189-residue chain is 3-isopropylmalate dehydratase small subunit (189 aa).

It belongs to the LeuD family. LeuD type 1 subfamily. As to quaternary structure, heterodimer of LeuC and LeuD.

The catalysed reaction is (2R,3S)-3-isopropylmalate = (2S)-2-isopropylmalate. It functions in the pathway amino-acid biosynthesis; L-leucine biosynthesis; L-leucine from 3-methyl-2-oxobutanoate: step 2/4. Its function is as follows. Catalyzes the isomerization between 2-isopropylmalate and 3-isopropylmalate, via the formation of 2-isopropylmaleate. The polypeptide is 3-isopropylmalate dehydratase small subunit (Staphylococcus epidermidis (strain ATCC 35984 / DSM 28319 / BCRC 17069 / CCUG 31568 / BM 3577 / RP62A)).